A 480-amino-acid chain; its full sequence is Radical SAM Nalpha-GlyT isomerase (480 aa).

Iron-sulfur cluster is bound by residues Cys125, Cys129, and Cys132. The disordered stretch occupies residues 457–480 (KIVEPTPPEEDGGERKIIPITQID).

The enzyme catalyses 5-N(alpha)-glycyl-dTMP in DNA + AH2 + S-adenosyl-L-methionine = 5-C(alpha)-glycyl-dTMP in DNA + 5'-deoxyadenosine + L-methionine + A + H(+). Functionally, isomerizes 5-N-alpha-glycinylthymidine (Nalpha-GlyT) into 5-Calpha-glycinylthymidine (Calpha-GlyT) as a step in the pathway leading to thymidine hypermodifications in the viral genome. As a final result of the pathway of hypermodification, 5-aminoethyl-2'-deoxyuridine (5-NedU) substitutes for about 30% of thymidines in the viral DNA. These modifications probably prevent degradation of viral genome by the host restriction-modification antiviral defense system. The polypeptide is Radical SAM Nalpha-GlyT isomerase (Pseudomonas phage M6).